Consider the following 146-residue polypeptide: Putative pre-16S rRNA nuclease (146 aa).

It belongs to the YqgF nuclease family.

It localises to the cytoplasm. Its function is as follows. Could be a nuclease involved in processing of the 5'-end of pre-16S rRNA. The protein is Putative pre-16S rRNA nuclease of Paraburkholderia phytofirmans (strain DSM 17436 / LMG 22146 / PsJN) (Burkholderia phytofirmans).